Consider the following 209-residue polypeptide: Uracil phosphoribosyltransferase (209 aa).

5-phospho-alpha-D-ribose 1-diphosphate-binding positions include R79, R104, and 131–139; that span reads DPMLATGGS. Uracil-binding positions include I194 and 199–201; that span reads GDA. Position 200 (D200) interacts with 5-phospho-alpha-D-ribose 1-diphosphate.

Belongs to the UPRTase family. The cofactor is Mg(2+).

It catalyses the reaction UMP + diphosphate = 5-phospho-alpha-D-ribose 1-diphosphate + uracil. Its pathway is pyrimidine metabolism; UMP biosynthesis via salvage pathway; UMP from uracil: step 1/1. Its activity is regulated as follows. Allosterically activated by GTP. Functionally, catalyzes the conversion of uracil and 5-phospho-alpha-D-ribose 1-diphosphate (PRPP) to UMP and diphosphate. This is Uracil phosphoribosyltransferase from Exiguobacterium sp. (strain ATCC BAA-1283 / AT1b).